The sequence spans 320 residues: Acetyl-coenzyme A carboxylase carboxyl transferase subunit alpha (320 aa).

The CoA carboxyltransferase C-terminal domain maps to 33–294 (AFESEIQALR…GDAVEDELKA (262 aa)).

The protein belongs to the AccA family. As to quaternary structure, acetyl-CoA carboxylase is a heterohexamer composed of biotin carboxyl carrier protein (AccB), biotin carboxylase (AccC) and two subunits each of ACCase subunit alpha (AccA) and ACCase subunit beta (AccD).

It localises to the cytoplasm. It carries out the reaction N(6)-carboxybiotinyl-L-lysyl-[protein] + acetyl-CoA = N(6)-biotinyl-L-lysyl-[protein] + malonyl-CoA. The protein operates within lipid metabolism; malonyl-CoA biosynthesis; malonyl-CoA from acetyl-CoA: step 1/1. Functionally, component of the acetyl coenzyme A carboxylase (ACC) complex. First, biotin carboxylase catalyzes the carboxylation of biotin on its carrier protein (BCCP) and then the CO(2) group is transferred by the carboxyltransferase to acetyl-CoA to form malonyl-CoA. This Caulobacter sp. (strain K31) protein is Acetyl-coenzyme A carboxylase carboxyl transferase subunit alpha.